Here is a 263-residue protein sequence, read N- to C-terminus: Complement C1q tumor necrosis factor-related protein 6 (263 aa).

The signal sequence occupies residues 1–24; the sequence is MRVIMGTASLGSIWAVFLLPLVFG. Residue N76 is glycosylated (N-linked (GlcNAc...) asparagine). Positions 80–123 are disordered; the sequence is LKGDKGDRGPSGTPGKPGKNGTRGDRGSQGIKGDKGQAGSPGSS. The 42-residue stretch at 82–123 folds into the Collagen-like domain; that stretch reads GDKGDRGPSGTPGKPGKNGTRGDRGSQGIKGDKGQAGSPGSS. In terms of domain architecture, C1q spans 124-263; sequence CQTHYSAFSV…SGHLIKAEDN (140 aa).

It is found in the secreted. The sequence is that of Complement C1q tumor necrosis factor-related protein 6 (C1qtnf6) from Rattus norvegicus (Rat).